The primary structure comprises 529 residues: Glucose-6-phosphate isomerase (529 aa).

The Proton donor role is filled by E323. Active-site residues include H352 and K456.

The protein belongs to the GPI family.

The protein localises to the cytoplasm. It catalyses the reaction alpha-D-glucose 6-phosphate = beta-D-fructose 6-phosphate. It participates in carbohydrate biosynthesis; gluconeogenesis. It functions in the pathway carbohydrate degradation; glycolysis; D-glyceraldehyde 3-phosphate and glycerone phosphate from D-glucose: step 2/4. Catalyzes the reversible isomerization of glucose-6-phosphate to fructose-6-phosphate. The sequence is that of Glucose-6-phosphate isomerase from Geobacter sulfurreducens (strain ATCC 51573 / DSM 12127 / PCA).